Reading from the N-terminus, the 222-residue chain is 7-cyano-7-deazaguanine synthase (222 aa).

Residue 8-18 coordinates ATP; that stretch reads LSGGLDSATCL. Zn(2+) contacts are provided by cysteine 187, cysteine 197, cysteine 200, and cysteine 203.

Belongs to the QueC family. Requires Zn(2+) as cofactor.

It carries out the reaction 7-carboxy-7-deazaguanine + NH4(+) + ATP = 7-cyano-7-deazaguanine + ADP + phosphate + H2O + H(+). The protein operates within purine metabolism; 7-cyano-7-deazaguanine biosynthesis. In terms of biological role, catalyzes the ATP-dependent conversion of 7-carboxy-7-deazaguanine (CDG) to 7-cyano-7-deazaguanine (preQ(0)). The chain is 7-cyano-7-deazaguanine synthase from Alcanivorax borkumensis (strain ATCC 700651 / DSM 11573 / NCIMB 13689 / SK2).